Reading from the N-terminus, the 429-residue chain is Histidine--tRNA ligase (429 aa).

This sequence belongs to the class-II aminoacyl-tRNA synthetase family. In terms of assembly, homodimer.

The protein resides in the cytoplasm. The catalysed reaction is tRNA(His) + L-histidine + ATP = L-histidyl-tRNA(His) + AMP + diphosphate + H(+). The chain is Histidine--tRNA ligase from Streptococcus mutans serotype c (strain ATCC 700610 / UA159).